Here is a 442-residue protein sequence, read N- to C-terminus: Histidine--tRNA ligase (442 aa).

The protein belongs to the class-II aminoacyl-tRNA synthetase family. Homodimer.

Its subcellular location is the cytoplasm. The catalysed reaction is tRNA(His) + L-histidine + ATP = L-histidyl-tRNA(His) + AMP + diphosphate + H(+). The chain is Histidine--tRNA ligase from Psychrobacter arcticus (strain DSM 17307 / VKM B-2377 / 273-4).